The chain runs to 180 residues: Hypoxanthine-guanine phosphoribosyltransferase (180 aa).

The diphosphate site is built by Lys43 and Gly44. Glu99 and Asp100 together coordinate Mg(2+). The active-site Proton acceptor is the Asp103. GMP contacts are provided by residues Lys131, 152-153, and Asp159; that span reads FV. Arg165 contacts diphosphate.

It belongs to the purine/pyrimidine phosphoribosyltransferase family. Mg(2+) is required as a cofactor.

It is found in the cytoplasm. The catalysed reaction is IMP + diphosphate = hypoxanthine + 5-phospho-alpha-D-ribose 1-diphosphate. It carries out the reaction GMP + diphosphate = guanine + 5-phospho-alpha-D-ribose 1-diphosphate. It participates in purine metabolism; IMP biosynthesis via salvage pathway; IMP from hypoxanthine: step 1/1. The protein operates within purine metabolism; GMP biosynthesis via salvage pathway; GMP from guanine: step 1/1. In terms of biological role, purine salvage pathway enzyme that catalyzes the transfer of the ribosyl-5-phosphate group from 5-phospho-alpha-D-ribose 1-diphosphate (PRPP) to the N9 position of the 6-oxopurines hypoxanthine and guanine to form the corresponding ribonucleotides IMP (inosine 5'-monophosphate) and GMP (guanosine 5'-monophosphate), with the release of PPi. This chain is Hypoxanthine-guanine phosphoribosyltransferase (hpt), found in Streptococcus pneumoniae serotype 4 (strain ATCC BAA-334 / TIGR4).